Consider the following 358-residue polypeptide: Feruloyl CoA ortho-hydroxylase F6H1-1 (358 aa).

Residues 200–308 (TKESLLMGSK…RISVPIFVNP (109 aa)) enclose the Fe2OG dioxygenase domain. 2-oxoglutarate is bound at residue tyrosine 216. Histidine 231, aspartate 233, and histidine 289 together coordinate Fe cation. 2-oxoglutarate is bound by residues arginine 299 and serine 301.

It belongs to the iron/ascorbate-dependent oxidoreductase family. The cofactor is L-ascorbate. It depends on Fe(2+) as a cofactor.

The catalysed reaction is (E)-feruloyl-CoA + 2-oxoglutarate + O2 = (E)-6-hydroxyferuloyl-CoA + succinate + CO2. It functions in the pathway phenylpropanoid metabolism. In terms of biological role, 2-oxoglutarate (OG)- and Fe(II)-dependent dioxygenase (2OGD) involved in scopoletin biosynthesis. Converts feruloyl CoA into 6'-hydroxyferuloyl CoA. This Ipomoea batatas (Sweet potato) protein is Feruloyl CoA ortho-hydroxylase F6H1-1.